Consider the following 101-residue polypeptide: Small ribosomal subunit protein bS18c (101 aa).

This sequence belongs to the bacterial ribosomal protein bS18 family. Part of the 30S ribosomal subunit.

It is found in the plastid. The protein resides in the chloroplast. The polypeptide is Small ribosomal subunit protein bS18c (Nymphaea alba (White water-lily)).